A 149-amino-acid chain; its full sequence is Transcriptional repressor NrdR (149 aa).

A zinc finger spans residues 3 to 34 (CPFCSATDTKVIDSRLVADGHQVRRRRECTLC). Residues 49–139 (PRVIKRDDTR…VYRAFEDVSQ (91 aa)) enclose the ATP-cone domain.

It belongs to the NrdR family. It depends on Zn(2+) as a cofactor.

Its function is as follows. Negatively regulates transcription of bacterial ribonucleotide reductase nrd genes and operons by binding to NrdR-boxes. The sequence is that of Transcriptional repressor NrdR from Shewanella denitrificans (strain OS217 / ATCC BAA-1090 / DSM 15013).